Here is a 185-residue protein sequence, read N- to C-terminus: CASP-like protein 2C2 (185 aa).

The Cytoplasmic portion of the chain corresponds to 1-22; it reads MAAAARVSEVKAEGLLRGACTA. A helical transmembrane segment spans residues 23–43; the sequence is LAAAAALLVGLSTQTETVLLV. At 44-53 the chain is on the extracellular side; the sequence is RKKATVKDVQ. Residues 54 to 74 traverse the membrane as a helical segment; the sequence is ALWVLAMAAAAAAGYHLLQLL. The Cytoplasmic portion of the chain corresponds to 75-104; sequence KCLYLGRVGGARPCRRSSRALAWTCLLLDK. Residues 105–125 traverse the membrane as a helical segment; the sequence is ACAYTTFATTVAAAQACVVAL. Over 126 to 146 the chain is Extracellular; sequence DGAHALQWTKLCNIYTRFCEQ. A helical transmembrane segment spans residues 147 to 167; that stretch reads VAGSLVLGMLAAVGTAVLSAA. Topologically, residues 168–185 are cytoplasmic; it reads SARNVFRHYASLETYAAH.

Belongs to the Casparian strip membrane proteins (CASP) family. As to quaternary structure, homodimer and heterodimers.

The protein resides in the cell membrane. The sequence is that of CASP-like protein 2C2 from Zea mays (Maize).